Consider the following 299-residue polypeptide: Probable lipid kinase YegS (299 aa).

In terms of domain architecture, DAGKc spans 2-133; the sequence is ADLPASLLIL…IDIAQVNKET (132 aa). ATP contacts are provided by residues T40, 66–72, and T95; that span reads GDGTINE. Mg(2+) contacts are provided by L215, D218, and L220. The active-site Proton acceptor is E271.

This sequence belongs to the diacylglycerol/lipid kinase family. YegS lipid kinase subfamily. The cofactor is Mg(2+). Ca(2+) is required as a cofactor.

Its subcellular location is the cytoplasm. Its function is as follows. Probably phosphorylates lipids; the in vivo substrate is unknown. This Escherichia fergusonii (strain ATCC 35469 / DSM 13698 / CCUG 18766 / IAM 14443 / JCM 21226 / LMG 7866 / NBRC 102419 / NCTC 12128 / CDC 0568-73) protein is Probable lipid kinase YegS.